Consider the following 447-residue polypeptide: MVGMMRKTKILVTLGPSLENKLDKAINLIDGVRFNMSHATTDYCEKFLNILEKNNIAKVMDLKGIKIRIKEVKLKNKILKMGEKVVIGEDIKLNYNIDTIEEGHFILINDGKIKLRVVEKTDKIIAVVEVGGEIKEGMGVNLPDTRIELPIIDETDLKNIKFAVEKDFEYIALSFVRNKEDVKELKDIISEYKGDCEVISKIETKEGLKNIKEIARESDGVMVARGDLGVEVPIENIPIEQKNILRIANRYGILSITATQILDSMINNPFPTRAEVTDIANAIYDGTDCLMLSNETTIGKYPIEAIKVLNKVAKVADEHYEEFGDRVCLEVESIDEGLVYAVYELYKKLNTKLVITPTYSGRTAKLISKLRINSKIIAPTPNIRTLKRLRLVWGVESCLMEEFDDMEKIINTCREMAKKEIGKGIYLITLGHPIGQKKTNTIKVESI.

Residue R33 participates in substrate binding. K(+)-binding residues include N35, S37, and D61. Position 35-38 (35-38 (NMSH)) interacts with ATP. An ATP-binding site is contributed by R68. E203 is a binding site for Mg(2+). Residues G226, D227, and T259 each coordinate substrate. D227 lines the Mg(2+) pocket.

It belongs to the pyruvate kinase family. As to quaternary structure, homotetramer. Mg(2+) is required as a cofactor. The cofactor is K(+).

The enzyme catalyses pyruvate + ATP = phosphoenolpyruvate + ADP + H(+). The protein operates within carbohydrate degradation; glycolysis; pyruvate from D-glyceraldehyde 3-phosphate: step 5/5. The chain is Pyruvate kinase from Methanocaldococcus jannaschii (strain ATCC 43067 / DSM 2661 / JAL-1 / JCM 10045 / NBRC 100440) (Methanococcus jannaschii).